Reading from the N-terminus, the 555-residue chain is Glutamine--tRNA ligase (555 aa).

A 'HIGH' region motif is present at residues 34–44 (PEPNGFLHIGH). ATP contacts are provided by residues 35–37 (EPN) and 41–47 (HIGHAKS). The L-glutamine site is built by Asp-67 and Tyr-212. Residues Thr-231, 261–262 (RL), and 269–271 (LSK) contribute to the ATP site. Positions 268–272 (VLSKR) match the 'KMSKS' region motif.

The protein belongs to the class-I aminoacyl-tRNA synthetase family. As to quaternary structure, monomer.

It is found in the cytoplasm. It catalyses the reaction tRNA(Gln) + L-glutamine + ATP = L-glutaminyl-tRNA(Gln) + AMP + diphosphate. The sequence is that of Glutamine--tRNA ligase from Alteromonas mediterranea (strain DSM 17117 / CIP 110805 / LMG 28347 / Deep ecotype).